A 491-amino-acid polypeptide reads, in one-letter code: MAHYPPSKDQLNELIQEVNQWAITNGLSMYPPKFEENPSNASVSPVTIYPTPIPRKCFDEAVQIQPVFNELYARITQDMAQPDSYLHKTTEALALSDSEFTGKLWSLYLATLKSAQYKKQNFRLGIFRSDYLIDKKKGTEQIKQVEFNTVSVSFAGLSEKVDRLHSYLNRANKYDPKGPIYNDQNMVISDSGYLLSKALAKAVESYKSQQSSSTTSDPIVAFIVQRNERNVFDQKVLELNLLEKFGTKSVRLTFDDVNDKLFIDDKTGKLFIRDTEQEIAVVYYRTGYTTTDYTSEKDWEARLFLEKSFAIKAPDLLTQLSGSKKIQQLLTDEGVLGKYISDAEKKSSLLKTFVKIYPLDDTKLGREGKRLALSEPSKYVLKPQREGGGNNVYKENIPNFLKGIEERHWDAYILMELIEPELNENNIILRDNKSYNEPIISELGIYGCVLFNDEQVLSNEFSGSLLRSKFNTSNEGGVAAGFGCLDSIILY.

Substrate is bound at residue R128. E146 serves as a coordination point for ATP. Residues E146 and N148 each coordinate Mg(2+). Substrate-binding positions include 150-153 (VSVS), 228-230 (ERN), Q234, and 285-288 (RTGY). Residues K324, 382 to 391 (KPQREGGGNN), Y393, 415 to 418 (MELI), and E442 contribute to the ATP site. E386 is a Mg(2+) binding site. R467 contacts substrate. 2 residues coordinate ATP: K469 and E475. 478 to 479 (VA) lines the substrate pocket.

It belongs to the eukaryotic GSH synthase family. Homodimer. It depends on Mg(2+) as a cofactor.

It carries out the reaction gamma-L-glutamyl-L-cysteine + glycine + ATP = glutathione + ADP + phosphate + H(+). It participates in sulfur metabolism; glutathione biosynthesis; glutathione from L-cysteine and L-glutamate: step 2/2. The chain is Glutathione synthetase GSH2 (GSH2) from Saccharomyces cerevisiae (strain ATCC 204508 / S288c) (Baker's yeast).